The sequence spans 253 residues: 1-(5-phosphoribosyl)-5-[(5-phosphoribosylamino)methylideneamino] imidazole-4-carboxamide isomerase (253 aa).

Asp-11 acts as the Proton acceptor in catalysis. The active-site Proton donor is Asp-132.

This sequence belongs to the HisA/HisF family.

It is found in the cytoplasm. It catalyses the reaction 1-(5-phospho-beta-D-ribosyl)-5-[(5-phospho-beta-D-ribosylamino)methylideneamino]imidazole-4-carboxamide = 5-[(5-phospho-1-deoxy-D-ribulos-1-ylimino)methylamino]-1-(5-phospho-beta-D-ribosyl)imidazole-4-carboxamide. Its pathway is amino-acid biosynthesis; L-histidine biosynthesis; L-histidine from 5-phospho-alpha-D-ribose 1-diphosphate: step 4/9. The protein is 1-(5-phosphoribosyl)-5-[(5-phosphoribosylamino)methylideneamino] imidazole-4-carboxamide isomerase of Methylobacterium nodulans (strain LMG 21967 / CNCM I-2342 / ORS 2060).